The following is a 193-amino-acid chain: Penicillin-binding protein activator LpoB (193 aa).

A signal peptide spans 1–16; that stretch reads MKKMLFVVAAVFLLAG. Cysteine 17 carries N-palmitoyl cysteine lipidation. The S-diacylglycerol cysteine moiety is linked to residue cysteine 17. Residues 23 to 50 are disordered; that stretch reads QQPPAPVEPVTPTEPTEPPKPIEPPIEV. Over residues 37–46 the composition is skewed to pro residues; the sequence is PTEPPKPIEP.

It belongs to the LpoB family. In terms of assembly, interacts with PBP1b.

The protein resides in the cell outer membrane. Regulator of peptidoglycan synthesis that is essential for the function of penicillin-binding protein 1B (PBP1b). This chain is Penicillin-binding protein activator LpoB, found in Proteus mirabilis (strain HI4320).